The chain runs to 274 residues: Large ribosomal subunit protein uL2 (274 aa).

Disordered stretches follow at residues 28–55 (APHAPLLEKKSKSGGRNNNGRITTRHVG) and 224–274 (VAMN…RRRK).

This sequence belongs to the universal ribosomal protein uL2 family. Part of the 50S ribosomal subunit. Forms a bridge to the 30S subunit in the 70S ribosome.

One of the primary rRNA binding proteins. Required for association of the 30S and 50S subunits to form the 70S ribosome, for tRNA binding and peptide bond formation. It has been suggested to have peptidyltransferase activity; this is somewhat controversial. Makes several contacts with the 16S rRNA in the 70S ribosome. This Pseudomonas putida (strain W619) protein is Large ribosomal subunit protein uL2.